We begin with the raw amino-acid sequence, 153 residues long: MHRIAIYSIGKKDEKCYEAIYEDLIKNSKKFALIETKNVFNKKINAAQSDAQKAMKAYSDTFKPFILSDGFNIALDPEGKCLDSFAFANLLKEHTKLAFFIGGAYGLERSFVQSCDMALSLSPLTMSHKIAKMVLLEQLFRGLSIIHNHPYHK.

S-adenosyl-L-methionine-binding positions include Leu-75, Gly-102, and 121 to 126 (LSPLTM).

Belongs to the RNA methyltransferase RlmH family. In terms of assembly, homodimer.

It is found in the cytoplasm. It catalyses the reaction pseudouridine(1915) in 23S rRNA + S-adenosyl-L-methionine = N(3)-methylpseudouridine(1915) in 23S rRNA + S-adenosyl-L-homocysteine + H(+). Its function is as follows. Specifically methylates the pseudouridine at position 1915 (m3Psi1915) in 23S rRNA. This chain is Ribosomal RNA large subunit methyltransferase H, found in Nitratiruptor sp. (strain SB155-2).